The following is a 240-amino-acid chain: Lectin (240 aa).

2 residues coordinate Mn(2+): Glu127 and Asp129. Residues Asp129, Tyr131, Asn133, and Asp138 each contribute to the Ca(2+) site. Positions 138 and 143 each coordinate Mn(2+).

This sequence belongs to the leguminous lectin family. As to quaternary structure, heterotetramer of two alpha and two beta chains; disulfide bond linked.

In terms of biological role, binds preferentially to oligosaccharides bearing the sequence Man-alpha-1-&gt;2 Man-alpha-1-&gt;6 Man-alpha-1-&gt;6Man found in early steps of glycoprotein processing in the endoplasmic reticulum. It binds weakly to highly processed oligosaccharide structures. The protein is Lectin of Leucomphalos mildbraedii (Bowringia mildbraedii).